The sequence spans 357 residues: N-methyltransferase dtpB (357 aa).

The protein belongs to the methyltransferase superfamily.

It functions in the pathway alkaloid biosynthesis. N-methyltransferase; part of the gene cluster that mediates the biosynthesis of the dimeric diketopiperazine alkaloid ditryptophenaline. The nonribosomal peptide synthase dtpA accepts L-tryptophan and L-phenylalanine as its substrates and forms the phenylalanyl-tryptophanyl cyclic dipeptide product cyclophenylalanyltryptophenyl. The N-methyltransferase dtpB is responsible for the N-methylation of cyclophenylalanyltryptophenyl to yield cyclo-N-methylphenylalanyltryptophenyl. The cytochrome P450 monooxygenase is responsible not only for pyrroloindole ring formation but also for concurrent dimerization of N-methylphenylalanyltryptophanyl diketopiperazine monomers into a homodimeric product. The chain is N-methyltransferase dtpB from Aspergillus flavus (strain ATCC 200026 / FGSC A1120 / IAM 13836 / NRRL 3357 / JCM 12722 / SRRC 167).